The primary structure comprises 333 residues: Large ribosomal subunit protein mL44 (333 aa).

Residues 1 to 30 (MASAVFRLLQQGPRRLLAPAVPTLAPPVRG) constitute a mitochondrion transit peptide. The RNase III domain occupies 86–228 (DLLKTAFINS…LITQMTGKEL (143 aa)). Positions 236-306 (NPMGLLVEEL…ARVALRKLYG (71 aa)) constitute a DRBM domain. The span at 311–327 (RRPWDYSKPKESPKRAE) shows a compositional bias: basic and acidic residues. The interval 311–333 (RRPWDYSKPKESPKRAEQTSVAS) is disordered.

This sequence belongs to the ribonuclease III family. Mitochondrion-specific ribosomal protein mL44 subfamily. Component of the mitochondrial ribosome large subunit (39S) which comprises a 16S rRNA and about 50 distinct proteins.

The protein resides in the mitochondrion. In terms of biological role, component of the 39S subunit of mitochondrial ribosome. May have a function in the assembly/stability of nascent mitochondrial polypeptides exiting the ribosome. The polypeptide is Large ribosomal subunit protein mL44 (Mrpl44) (Mus musculus (Mouse)).